Here is a 447-residue protein sequence, read N- to C-terminus: Sulfoquinovose isomerase (447 aa).

Belongs to the SqvD family.

The catalysed reaction is 6-sulfo-beta-D-quinovose = 6-deoxy-6-sulfo-D-fructose. Part of the sulfo-TK pathway, a D-sulfoquinovose degradation pathway that produces 2-hydroxyethane-1-sulfonate (isethionate). Catalyzes the isomerization of sulfoquinovose (SQ) to 6-deoxy-6-sulfo-D-fructose (SF). This Clostridium sp. (strain MSTE9) protein is Sulfoquinovose isomerase.